We begin with the raw amino-acid sequence, 942 residues long: MPGNKYNCSSSHIPLSRTERLLRDRELREKRKSNRARNPNDVAGSSENSENDLRLEGDSSRQYVEQYLEGAAAAMAHDDACERQEVRPYNRQRLLVVANRLPVSAVRRGEDSWSLEISAGGLVSALLGVKEFEARWIGWAGVNVPDEVGQKALSKALAEKRCIPVFLDEEIVHQYYNGYCNNILWPLFHYLGLPQEDRLATTRSFQSQFAAYKKANQMFADVVNEHYEEGDVVWCHDYHLMFLPKCLKEYNSKMKVGWFLHTPFPSSEIHRTLPSRSELLRSVLAADLVGFHTYDYARHFVSACTRILGLEGTPEGVEDQGRLTRVAAFPIGIDSDRFIRALEVPEVIQHMKELKERFAGRKVMLGVDRLDMIKGIPQKILAFEKFLEENANWRDKVVLLQIAVPTRTDVPEYQKLTSQVHEIVGRINGRFGTLTAVPIHHLDRSLDFHALCALYAVTDVALVTSLRDGMNLVSYEFVACQEAKKGVLILSEFAGAAQSLGAGAILVNPWNITEVAASIGQALNMTAEEREKRHRHNFHHVKTHTAQEWAETFVSELNDTVIEAQLRISKVPPELPQHDAIQRYSKSNNRLLILGFNATLTEPVDNQGRRGDQIKEMDLNLHPELKGPLKALCSDPSTTIVVLSGSSRSVLDKNFGEYDMWLAAENGMFLRLTNGEWMTTMPEHLNMEWVDSVKHVFKYFTERTPRSHFETRDTSLIWNYKYADIEFGRLQARDLLQHLWTGPISNASVDVVQGSRSVEVRAVGVTKGAAIDRILGEIVHSKSMTTPIDYVLCIGHFLGKDEDVYTFFEPELPSDMPAIARSRPSSDSGAKSSSGDRRPPSKSTHNNNKSGSKSSSSSNSNNNNKSSQRSLQSERKSGSNHSLGNSRRPSPEKISWNVLDLKGENYFSCAVGRTRTNARYLLGSPDDVVCFLEKLADTTSSP.

The disordered stretch occupies residues 28 to 57 (REKRKSNRARNPNDVAGSSENSENDLRLEG). Residues 92–559 (QRLLVVANRL…AETFVSELND (468 aa)) are glycosyltransferase. Residues 815–892 (DMPAIARSRP…LGNSRRPSPE (78 aa)) form a disordered region. Low complexity-rich tracts occupy residues 821 to 833 (RSRPSSDSGAKSS) and 841 to 867 (SKSTHNNNKSGSKSSSSSNSNNNNKSS). Over residues 879-888 (SNHSLGNSRR) the composition is skewed to polar residues.

In the N-terminal section; belongs to the glycosyltransferase 20 family. The protein in the C-terminal section; belongs to the trehalose phosphatase family. Expressed in seedlings, leaves, roots, stems, flowers and siliques.

It localises to the vacuole. The protein localises to the secreted. The protein resides in the cell wall. It is found in the cytoplasm. It carries out the reaction D-glucose 6-phosphate + UDP-alpha-D-glucose = alpha,alpha-trehalose 6-phosphate + UDP + H(+). In terms of biological role, required for normal embryo development, vegetative growth and transition to flowering. Regulates embryo growth, cell wall deposition, starch and sucrose degradation, but not cell differentiation. Involved in the regulation of glucose sensing and signaling genes during plant development. The polypeptide is Alpha,alpha-trehalose-phosphate synthase [UDP-forming] 1 (Arabidopsis thaliana (Mouse-ear cress)).